The sequence spans 192 residues: Flavin prenyltransferase UbiX (192 aa).

FMN-binding positions include 10–12 (GAS), Ser-36, 92–95 (SVAT), and Arg-127. Dimethylallyl phosphate is bound by residues Tyr-157 and Lys-173.

The protein belongs to the UbiX/PAD1 family.

It catalyses the reaction dimethylallyl phosphate + FMNH2 = prenylated FMNH2 + phosphate. Flavin prenyltransferase that catalyzes the synthesis of the prenylated FMN cofactor (prenyl-FMN) for 4-hydroxy-3-polyprenylbenzoic acid decarboxylase UbiD. The prenyltransferase is metal-independent and links a dimethylallyl moiety from dimethylallyl monophosphate (DMAP) to the flavin N5 and C6 atoms of FMN. The protein is Flavin prenyltransferase UbiX of Chlamydia trachomatis serovar D (strain ATCC VR-885 / DSM 19411 / UW-3/Cx).